We begin with the raw amino-acid sequence, 376 residues long: Protein STRICTOSIDINE SYNTHASE-LIKE 8 (376 aa).

The N-terminal stretch at methionine 1–glycine 31 is a signal peptide. Residues asparagine 98, asparagine 172, and asparagine 224 are each glycosylated (N-linked (GlcNAc...) asparagine).

Belongs to the strictosidine synthase family.

It localises to the vacuole. In Arabidopsis thaliana (Mouse-ear cress), this protein is Protein STRICTOSIDINE SYNTHASE-LIKE 8.